Here is a 1298-residue protein sequence, read N- to C-terminus: Activating molecule in BECN1-regulated autophagy protein 1 (1298 aa).

The interval 1-22 is interaction with DDB1; the sequence is MKVVPEKNAVRILWGRERGARA. A Glycyl lysine isopeptide (Lys-Gly) (interchain with G-Cter in ubiquitin) cross-link involves residue Lys-45. 3 WD repeats span residues 51-90, 93-133, and 135-175; these read DSPR…CVHS, GHRR…ESWF, and DSNN…AVVK. Ser-52 is subject to Phosphoserine; by MTOR. A compositionally biased stretch (polar residues) spans 254–266; the sequence is IQVGEQSTVQDSA. A disordered region spans residues 254–284; that stretch reads IQVGEQSTVQDSATPSPPPPPPQPSTERPRT. Positions 268 to 277 are enriched in pro residues; sequence PSPPPPPPQP. Residues 275–281 carry the PxP motif 1 motif; that stretch reads PQPSTER. The residue at position 328 (Ser-328) is a Phosphoserine. The tract at residues 343-413 is disordered; it reads FVQTEPFHPP…SRYHREIAPG (71 aa). The segment covering 354 to 385 has biased composition (polar residues); the sequence is QASSTQQDQGLLNRPSAFSTVQSSTAGNTLRN. Phosphoserine is present on residues Ser-394 and Ser-443. 3 stretches are compositionally biased toward polar residues: residues 458–467, 547–561, and 590–601; these read SQASVYTSAT, HQPT…SNLS, and NYSSGEASSSWQ. 4 disordered regions span residues 458-494, 538-561, 590-690, and 747-796; these read SQAS…NSGS, IESE…SNLS, NYSS…DSLR, and RYQQ…NARM. 2 stretches are compositionally biased toward low complexity: residues 602 to 614 and 628 to 639; these read VPSS…SSGS and SSSRLELSSSAS. A phosphoserine mark is found at Ser-635 and Ser-639. Residues 661-674 show a composition bias toward polar residues; sequence YTQSSRSGTVSQEA. Arg-747 bears the Asymmetric dimethylarginine mark. Positions 772 to 781 are enriched in acidic residues; sequence TDLEFEDFED. The residue at position 1043 (Ser-1043) is a Phosphoserine; by IKKA. Residues 1043–1052 carry the LIR motif; that stretch reads SGVEYYWDQL. Positions 1060–1075 are enriched in polar residues; sequence HSNSRSSERPGTSRAT. Residues 1060 to 1079 are disordered; sequence HSNSRSSERPGTSRATWRTD. 2 short sequence motifs (TQT motif) span residues 1104 to 1106 and 1116 to 1118; these read TQT. Disordered regions lie at residues 1112-1143, 1190-1214, and 1227-1298; these read QNAE…YGAS, RSSQ…SRGL, and SPRT…PRNR. The segment covering 1191-1212 has biased composition (polar residues); sequence SSQTGTEPGAAHTSSPQPSTSR. The residue at position 1205 (Ser-1205) is a Phosphoserine. Positions 1206 to 1212 match the PxP motif 2 motif; that stretch reads PQPSTSR.

It belongs to the WD repeat AMBRA1 family. As to quaternary structure, component of the DCX(AMBRA1) E3 ubiquitin ligase complex, also named CRL4(AMBRA1), at least composed of CUL4 (CUL4A or CUL4B), DDB1, AMBRA1 and RBX1. Interacts with BECN1. Probably forms a complex with BECN1 and PIK3C3. Interacts with BECN2. Interacts with BCL2; leading to prevent interaction with BCN1 and autophagy, interaction is disrupted upon autophagy induction. Interacts with ULK1. Interacts (via PxP motifs) with PPP2CA; enhancing interaction between PPP2CA and MYC or FOXO3. Forms a complex with PPP2CA and BECN1; AMBRA1 and BECN1 components of the complex regulate MYC stability via different pathways. Interacts (TQT motifs) with DYNLL1 and DYNLL2; tethering AMBRA1 and the BECN1-PIK3C3 complex in absence of autophagy. Interacts with TRAF6; interaction is required to mediate 'Lys-63'-linked ubiquitination of ULK1. Interacts with TRIM32; promoting activation of ULK1 by TRIM32 via unanchored 'Lys-63'-linked polyubiquitin chains. Interacts with PRKN. Interacts (via LIR motif) with LC3 (MAP1LC3A, MAP1LC3B or MAP1LC3C). Interacts with HUWE1. Interacts with PTK2/FAK. Interacts with SRC; required for SRC trafficking to autophagosomes. Phosphorylation at Ser-52 by MTOR inhibits its ability to regulate autophagy and mediate ubiquitination of ULK1. Phosphorylation by ULK1 in response to autophagy induction abolishes interaction with DYNLL1 and DYNLL2, releasing AMBRA1 from the cytoskeletal docking site to induce autophagosome nucleation. Phosphorylation by MTOR inhibits interaction with PPP2CA and subsequent dephosphorylation of MYC. Phosphorylation at Ser-1043 by CHUK/IKKA promotes its interaction with ATG8 family proteins GABARAP and MAP1LC3B and its mitophagic activity. Post-translationally, ubiquitinated by RNF2 via 'Lys-48'-linkage in unstressed cells, leading to its degradation by the proteasome. Induction of autophagy promotes stabilization via interaction with CUL4 (CUL4A or CUL4B) and DDB1. Upon prolonged starvation, ubiquitinated and degraded, terminating the autophagy response. In terms of processing, undergoes proteolytic processing by caspase-6 (CASP6), caspase-7 (CASP7) and caspase-8 (CASP8) during apoptosis, resulting in the dismantling of the autophagic machinery and the accomplishment of the programmed cell death program. Also cleaved by calpains during apoptosis, which mediate a complete proteolytic degradation.

The protein resides in the endoplasmic reticulum. The protein localises to the cytoplasm. It is found in the cytoskeleton. Its subcellular location is the cytoplasmic vesicle. It localises to the autophagosome. The protein resides in the mitochondrion. The protein localises to the cytosol. It is found in the nucleus. Its subcellular location is the cell junction. It localises to the focal adhesion. It participates in protein modification; protein ubiquitination. Substrate-recognition component of a DCX (DDB1-CUL4-X-box) E3 ubiquitin-protein ligase complex involved in cell cycle control and autophagy. The DCX(AMBRA1) complex specifically mediates the polyubiquitination of target proteins such as BECN1, CCND1, CCND2, CCND3, ELOC and ULK1. Acts as an upstream master regulator of the transition from G1 to S cell phase: AMBRA1 specifically recognizes and binds phosphorylated cyclin-D (CCND1, CCND2 and CCND3), leading to cyclin-D ubiquitination by the DCX(AMBRA1) complex and subsequent degradation. By controlling the transition from G1 to S phase and cyclin-D degradation, AMBRA1 acts as a tumor suppressor that promotes genomic integrity during DNA replication and counteracts developmental abnormalities and tumor growth. AMBRA1 also regulates the cell cycle by promoting MYC dephosphorylation and degradation independently of the DCX(AMBRA1) complex: acts via interaction with the catalytic subunit of protein phosphatase 2A (PPP2CA), which enhances interaction between PPP2CA and MYC, leading to MYC dephosphorylation and degradation. Acts as a regulator of Cul5-RING (CRL5) E3 ubiquitin-protein ligase complexes by mediating ubiquitination and degradation of Elongin-C (ELOC) component of CRL5 complexes. Acts as a key regulator of autophagy by modulating the BECN1-PIK3C3 complex: controls protein turnover during neuronal development, and regulates normal cell survival and proliferation. In normal conditions, AMBRA1 is tethered to the cytoskeleton via interaction with dyneins DYNLL1 and DYNLL2. Upon autophagy induction, AMBRA1 is released from the cytoskeletal docking site to induce autophagosome nucleation by mediating ubiquitination of proteins involved in autophagy. The DCX(AMBRA1) complex mediates 'Lys-63'-linked ubiquitination of BECN1, increasing the association between BECN1 and PIK3C3 to promote PIK3C3 activity. In collaboration with TRAF6, AMBRA1 mediates 'Lys-63'-linked ubiquitination of ULK1 following autophagy induction, promoting ULK1 stability and kinase activity. Also activates ULK1 via interaction with TRIM32: TRIM32 stimulates ULK1 through unanchored 'Lys-63'-linked polyubiquitin chains. Also acts as an activator of mitophagy via interaction with PRKN and LC3 proteins (MAP1LC3A, MAP1LC3B or MAP1LC3C); possibly by bringing damaged mitochondria onto autophagosomes. Also activates mitophagy by acting as a cofactor for HUWE1; acts by promoting HUWE1-mediated ubiquitination of MFN2. AMBRA1 is also involved in regulatory T-cells (Treg) differentiation by promoting FOXO3 dephosphorylation independently of the DCX(AMBRA1) complex: acts via interaction with PPP2CA, which enhances interaction between PPP2CA and FOXO3, leading to FOXO3 dephosphorylation and stabilization. May act as a regulator of intracellular trafficking, regulating the localization of active PTK2/FAK and SRC. Also involved in transcription regulation by acting as a scaffold for protein complexes at chromatin. In Homo sapiens (Human), this protein is Activating molecule in BECN1-regulated autophagy protein 1.